Here is a 188-residue protein sequence, read N- to C-terminus: Elongation factor P (188 aa).

Lys34 carries the N6-(3,6-diaminohexanoyl)-5-hydroxylysine modification.

It belongs to the elongation factor P family. May be beta-lysylated on the epsilon-amino group of Lys-34 by the combined action of EpmA and EpmB, and then hydroxylated on the C5 position of the same residue by EpmC (if this protein is present). Lysylation is critical for the stimulatory effect of EF-P on peptide-bond formation. The lysylation moiety may extend toward the peptidyltransferase center and stabilize the terminal 3-CCA end of the tRNA. Hydroxylation of the C5 position on Lys-34 may allow additional potential stabilizing hydrogen-bond interactions with the P-tRNA.

It localises to the cytoplasm. It participates in protein biosynthesis; polypeptide chain elongation. Its function is as follows. Involved in peptide bond synthesis. Alleviates ribosome stalling that occurs when 3 or more consecutive Pro residues or the sequence PPG is present in a protein, possibly by augmenting the peptidyl transferase activity of the ribosome. Modification of Lys-34 is required for alleviation. The chain is Elongation factor P from Xanthomonas oryzae pv. oryzae (strain MAFF 311018).